We begin with the raw amino-acid sequence, 357 residues long: Probable cinnamyl alcohol dehydrogenase 1 (357 aa).

Position 47 (Cys-47) interacts with Zn(2+). Thr-49 provides a ligand contact to NADP(+). Positions 69, 70, 100, 103, 106, 114, and 163 each coordinate Zn(2+). Residues Thr-167, 188 to 193 (GLGGVG), 211 to 216 (SSSNKK), Thr-251, Gly-275, and 298 to 300 (SFI) each bind NADP(+).

Belongs to the zinc-containing alcohol dehydrogenase family. As to quaternary structure, homodimer. Zn(2+) is required as a cofactor. The N-terminus is blocked.

It carries out the reaction (E)-cinnamyl alcohol + NADP(+) = (E)-cinnamaldehyde + NADPH + H(+). It catalyses the reaction (E)-coniferol + NADP(+) = (E)-coniferaldehyde + NADPH + H(+). The catalysed reaction is (E)-sinapyl alcohol + NADP(+) = (E)-sinapaldehyde + NADPH + H(+). The enzyme catalyses (E)-4-coumaroyl alcohol + NADP(+) = (E)-4-coumaraldehyde + NADPH + H(+). It carries out the reaction (E)-caffeyl alcohol + NADP(+) = (E)-caffeyl aldehyde + NADPH + H(+). It functions in the pathway aromatic compound metabolism; phenylpropanoid biosynthesis. Functionally, involved in lignin biosynthesis. Catalyzes the final step specific for the production of lignin monomers. Catalyzes the NADPH-dependent reduction of coniferaldehyde, 5-hydroxyconiferaldehyde, sinapaldehyde, 4-coumaraldehyde and caffeyl aldehyde to their respective alcohols. The protein is Probable cinnamyl alcohol dehydrogenase 1 of Nicotiana tabacum (Common tobacco).